The primary structure comprises 602 residues: Myotubularin (602 aa).

The span at 1 to 16 shows a compositional bias: polar residues; sequence MATSSTPKYNSNSLEN. Residues 1 to 33 are disordered; it reads MATSSTPKYNSNSLENSVRRSPGDGINHEQNDE. A compositionally biased stretch (basic and acidic residues) spans 17-33; that stretch reads SVRRSPGDGINHEQNDE. One can recognise a GRAM domain in the interval 28–96; that stretch reads HEQNDEISRL…GVIARIEKMG (69 aa). Residues 162–537 enclose the Myotubularin phosphatase domain; sequence GWAVYDAMTE…RHLELWVNYY (376 aa). Residues N287, N312, and I313 each contribute to the a 1,2-diacyl-sn-glycero-3-phospho-(1D-myo-inositol-3,5-bisphosphate) site. Residues N287, N312, and I313 each contribute to the a 1,2-diacyl-sn-glycero-3-phospho-(1D-myo-inositol-3-phosphate) site. C374 serves as the catalytic Phosphocysteine intermediate. A 1,2-diacyl-sn-glycero-3-phospho-(1D-myo-inositol-3,5-bisphosphate) is bound by residues S375, D376, G377, W378, D379, R380, K416, and R420. Residues S375, D376, G377, W378, D379, and R380 each coordinate a 1,2-diacyl-sn-glycero-3-phospho-(1D-myo-inositol-3-phosphate). Residue R420 participates in a 1,2-diacyl-sn-glycero-3-phospho-(1D-myo-inositol-3-phosphate) binding. Residues 577–602 are disordered; it reads NSPKINRSTTSPSSPSQMMPQVQTPF. Low complexity predominate over residues 584 to 602; sequence STTSPSSPSQMMPQVQTPF.

This sequence belongs to the protein-tyrosine phosphatase family. Non-receptor class myotubularin subfamily.

Its subcellular location is the cytoplasm. The protein resides in the cell membrane. It is found in the cell projection. It localises to the filopodium. The protein localises to the ruffle. Its subcellular location is the late endosome. The protein resides in the myofibril. It is found in the sarcomere. It carries out the reaction a 1,2-diacyl-sn-glycero-3-phospho-(1D-myo-inositol-3-phosphate) + H2O = a 1,2-diacyl-sn-glycero-3-phospho-(1D-myo-inositol) + phosphate. The catalysed reaction is a 1,2-diacyl-sn-glycero-3-phospho-(1D-myo-inositol-3,5-bisphosphate) + H2O = a 1,2-diacyl-sn-glycero-3-phospho-(1D-myo-inositol-5-phosphate) + phosphate. The enzyme catalyses 1,2-dioctanoyl-sn-glycero-3-phospho-(1-D-myo-inositol-3-phosphate) + H2O = 1,2-dioctanoyl-sn-glycero-3-phospho-(1D-myo-inositol) + phosphate. It catalyses the reaction 1,2-dioctanoyl-sn-glycero-3-phospho-(1D-myo-inositol-3,5-bisphosphate) + H2O = 1,2-dioctanoyl-sn-glycero-3-phospho-(1D-myo-inositol-5-phosphate) + phosphate. It carries out the reaction 1,2-dihexadecanoyl-sn-glycero-3-phospho-(1D-myo-inositol-3,5-phosphate) + H2O = 1,2-dihexadecanoyl-sn-glycero-3-phospho-(1D-myo-inositol-5-phosphate) + phosphate. Its function is as follows. Lipid phosphatase which dephosphorylates phosphatidylinositol 3-monophosphate (PI3P) and phosphatidylinositol 3,5-bisphosphate (PI(3,5)P2). The protein is Myotubularin (mtm1) of Xenopus laevis (African clawed frog).